The primary structure comprises 417 residues: Zinc finger protein CONSTANS-LIKE 16 (417 aa).

Positions 17, 20, 40, and 45 each coordinate Zn(2+). A B box-type; atypical zinc finger spans residues 17-59 (CDSCVKRRARWYCAADDAFLCQSCDSLVHSANPLARRHERVRL). A disordered region spans residues 63–105 (SPAVVKHSNHSSASPPHEVATWHHGFTRKARTPRGSGKKNNSS). The stretch at 212-239 (LSNSEMFKIEKDEIEEEVEEIKAMSMDI) forms a coiled coil. The CCT domain occupies 361 to 403 (REARVSRYREKRRTRLFSKKIRYEVRKLNAEKRPRMKGRFVKR).

Belongs to the CONSTANS family.

The protein localises to the nucleus. The chain is Zinc finger protein CONSTANS-LIKE 16 (COL16) from Arabidopsis thaliana (Mouse-ear cress).